The primary structure comprises 276 residues: F-actin-capping protein subunit beta (276 aa).

This sequence belongs to the F-actin-capping protein beta subunit family. As to quaternary structure, component of the F-actin capping complex, composed of a heterodimer of an alpha and a beta subunit. Subunit of dynactin, a multiprotein complex part of a tripartite complex with dynein and a adapter, such as BICDL1, BICD2 or HOOK3.

Its subcellular location is the cytoplasm. It localises to the cytoskeleton. Its function is as follows. F-actin-capping proteins bind in a Ca(2+)-independent manner to the fast growing ends of actin filaments (barbed end) thereby blocking the exchange of subunits at these ends. Unlike other capping proteins (such as gelsolin and severin), these proteins do not sever actin filaments. Forms, with CAPZB, the barbed end of the fast growing ends of actin filaments in the dynactin complex and stabilizes dynactin structure. The dynactin multiprotein complex activates the molecular motor dynein for ultra-processive transport along microtubules. The protein is F-actin-capping protein subunit beta (cpb) of Drosophila melanogaster (Fruit fly).